The following is a 159-amino-acid chain: Transcription elongation factor GreA (159 aa).

Residues 43 to 76 (LSENAEYDAAREEQSQLEAKIGDLENKLASATIL) are a coiled coil.

It belongs to the GreA/GreB family.

In terms of biological role, necessary for efficient RNA polymerase transcription elongation past template-encoded arresting sites. The arresting sites in DNA have the property of trapping a certain fraction of elongating RNA polymerases that pass through, resulting in locked ternary complexes. Cleavage of the nascent transcript by cleavage factors such as GreA or GreB allows the resumption of elongation from the new 3'terminus. GreA releases sequences of 2 to 3 nucleotides. The sequence is that of Transcription elongation factor GreA from Chlorobaculum parvum (strain DSM 263 / NCIMB 8327) (Chlorobium vibrioforme subsp. thiosulfatophilum).